Here is a 108-residue protein sequence, read N- to C-terminus: UPF0060 membrane protein KPK_2870 (108 aa).

The next 4 helical transmembrane spans lie at 6-26, 29-49, 61-81, and 86-106; these read LLFFATALCEIIGCYLPWLWL, GATPLLLIPTGLALALFVWLL, AAYGGVYVCTALLWLRVVDGV, and YDWAGAIIALCGMLIIVAGWG.

It belongs to the UPF0060 family.

It is found in the cell inner membrane. The protein is UPF0060 membrane protein KPK_2870 of Klebsiella pneumoniae (strain 342).